A 375-amino-acid polypeptide reads, in one-letter code: Aminomethyltransferase (375 aa).

It belongs to the GcvT family. As to quaternary structure, the glycine cleavage system is composed of four proteins: P, T, L and H.

The enzyme catalyses N(6)-[(R)-S(8)-aminomethyldihydrolipoyl]-L-lysyl-[protein] + (6S)-5,6,7,8-tetrahydrofolate = N(6)-[(R)-dihydrolipoyl]-L-lysyl-[protein] + (6R)-5,10-methylene-5,6,7,8-tetrahydrofolate + NH4(+). Functionally, the glycine cleavage system catalyzes the degradation of glycine. This chain is Aminomethyltransferase, found in Cupriavidus necator (strain ATCC 17699 / DSM 428 / KCTC 22496 / NCIMB 10442 / H16 / Stanier 337) (Ralstonia eutropha).